Consider the following 689-residue polypeptide: Glycine--tRNA ligase beta subunit (689 aa).

The protein belongs to the class-II aminoacyl-tRNA synthetase family. Tetramer of two alpha and two beta subunits.

It is found in the cytoplasm. The catalysed reaction is tRNA(Gly) + glycine + ATP = glycyl-tRNA(Gly) + AMP + diphosphate. The polypeptide is Glycine--tRNA ligase beta subunit (Actinobacillus pleuropneumoniae serotype 3 (strain JL03)).